Consider the following 205-residue polypeptide: dTTP/UTP pyrophosphatase (205 aa).

Catalysis depends on Asp71, which acts as the Proton acceptor.

Belongs to the Maf family. YhdE subfamily. It depends on a divalent metal cation as a cofactor.

The protein localises to the cytoplasm. The enzyme catalyses dTTP + H2O = dTMP + diphosphate + H(+). It catalyses the reaction UTP + H2O = UMP + diphosphate + H(+). Nucleoside triphosphate pyrophosphatase that hydrolyzes dTTP and UTP. May have a dual role in cell division arrest and in preventing the incorporation of modified nucleotides into cellular nucleic acids. The protein is dTTP/UTP pyrophosphatase of Syntrophus aciditrophicus (strain SB).